The following is a 564-amino-acid chain: Arginine--tRNA ligase (564 aa).

A 'HIGH' region motif is present at residues 122–132; the sequence is PNIAKPFSIGH.

The protein belongs to the class-I aminoacyl-tRNA synthetase family. Monomer.

Its subcellular location is the cytoplasm. The catalysed reaction is tRNA(Arg) + L-arginine + ATP = L-arginyl-tRNA(Arg) + AMP + diphosphate. The protein is Arginine--tRNA ligase of Lactococcus lactis subsp. lactis (strain IL1403) (Streptococcus lactis).